The chain runs to 131 residues: Fatty acid-binding protein (131 aa).

Residues Arg-106 and 126 to 128 (RPY) contribute to the (5Z,8Z,11Z,14Z)-eicosatetraenoate site. (9Z)-octadecenoate-binding positions include Arg-106 and 126 to 128 (RPY).

Belongs to the calycin superfamily. Fatty-acid binding protein (FABP) family.

Its subcellular location is the cytoplasm. Its function is as follows. FABPs are thought to play a role in the intracellular transport of long-chain fatty acids and their acyl-CoA esters. This chain is Fatty acid-binding protein, found in Lepidoglyphus destructor (Storage mite).